We begin with the raw amino-acid sequence, 979 residues long: Protein SMAX1-LIKE 6 (979 aa).

The 183-residue stretch at 8–190 folds into the Clp R domain; it reads ARECLTEEAA…PVTQLSSRFS (183 aa). 2 repeat regions span residues 12–86 and 100–190; these read LTEE…LDRL and VSNS…SRFS. An EAR motif is present at residues 833–837; the sequence is LDLNL.

Belongs to the ClpA/ClpB family. In terms of assembly, interacts with TPL/TPR in an EAR-motif dependent manner. Interacts with TPR3. Interacts with MAX2 and TPR2. Interacts with D14. The interaction with D14 occurs in the presence of (2'R) stereoisomers of strigolactones, but not (2'S) stereoisomers. Post-translationally, ubiquitinated upon strigolactone treatment. Probable proteolytic target of SCF(MAX2)-mediated stigolactone signaling. In terms of tissue distribution, detected in roots, seedlings and axillary branches. Expressed in the primary rosette buds and expanding leaves of adult rosettes, the vasculature of the hypocotyls, cotyledons, and mature roots, and in the midvein and petioles of young leaves.

The protein resides in the nucleus. Functionally, probable component of a transcriptional corepressor complex involved in branching control. Regulates cotyledon expansion and lateral root growth, but not germination or hypocotyl elongation. Promotes auxin transport and PIN1 accumulation in the stem and represses BRC1/TCP18 expression in axillary buds. This Arabidopsis thaliana (Mouse-ear cress) protein is Protein SMAX1-LIKE 6.